The chain runs to 68 residues: Large ribosomal subunit protein bL32 (68 aa).

Belongs to the bacterial ribosomal protein bL32 family.

The protein is Large ribosomal subunit protein bL32 of Onion yellows phytoplasma (strain OY-M).